The primary structure comprises 172 residues: Caltractin (172 aa).

The interval 1 to 23 (MQKYGSKKIGATSATSSNKQKVQ) is disordered. Positions 12 to 21 (TSATSSNKQK) are enriched in polar residues. EF-hand domains are found at residues 29–64 (EQRQ…LGFE), 65–99 (PKKE…KMSE), 101–136 (DSHA…LGEN), and 137–172 (MTDE…TNLF). Positions 42, 44, 46, 48, and 53 each coordinate Ca(2+).

Belongs to the centrin family. In terms of assembly, monomer.

The protein resides in the cytoplasm. The protein localises to the cytoskeleton. Its subcellular location is the microtubule organizing center. It localises to the centrosome. In terms of biological role, plays a fundamental role in microtubule-organizing center structure and function. This is Caltractin (CTN) from Naegleria gruberi (Amoeba).